A 1605-amino-acid chain; its full sequence is Kinesin-like protein klp-12 (1605 aa).

In terms of domain architecture, Kinesin motor spans 5–358 (CVQVALRIRP…MKYANRAKEI (354 aa)). 84–91 (GQTGSGKT) provides a ligand contact to ATP. Mg(2+) contacts are provided by Thr-91 and Ser-217. 3 disordered regions span residues 548–596 (GENV…EESE), 1085–1152 (VSDA…SNNN), and 1198–1232 (SRSN…SSSK). Positions 550 to 559 (NVSSEYSSMA) are enriched in polar residues. Acidic residues predominate over residues 560 to 596 (QDEDGTSNEAEELLDEEDLDEDEDETAEEKQEQEESE). Positions 575 to 730 (EEDLDEDEDE…KKAKVELIKK (156 aa)) form a coiled coil. The segment covering 1116–1152 (VSTSPASTSFANSTSQSPSFSRNTRFRSTVGGVSNNN) has biased composition (polar residues). The span at 1200-1232 (SNLMSSSSSTTTTTLSSSNLLNPRGTTSSSSSK) shows a compositional bias: low complexity. 4 WD repeats span residues 1282-1319 (GHAR…EIRT), 1389-1427 (FLET…PLGR), 1525-1566 (AHQQ…RMKL), and 1573-1605 (AHQE…SNAV).

It belongs to the TRAFAC class myosin-kinesin ATPase superfamily. Kinesin family. In terms of assembly, component of a complex at least composed of alpha tubulin and beta tubulin. Within the complex, interacts with the alpha tubulin and beta tubulin dimer.

The protein resides in the cytoplasm. It is found in the cytoskeleton. Functionally, microtubule-binding motor protein which has ATPase activity. In complex with alpha and beta tubulins, preferentially binds to the growing microtubule plus-end to stabilize it and detaches following ATP hydrolysis. Negatively regulates axonal length through inhibiting microtubule polymerization at its plus-end. The chain is Kinesin-like protein klp-12 from Caenorhabditis elegans.